An 817-amino-acid chain; its full sequence is MEEEGHKSLTSHLPQSSSSLSQSREIAKEFTSNIPPPTIKTNSSSSNILKPRLSLQNEVNQLKPAKFPSKMLPPGSLASVKSSSLAKKARPFTASSNPRMPKSAHPISSRSVSASSHFGRPASAVSSSLNSSDDVRSMSDESMESYNDEKSVNASALRTTEDRLRSMEMAYAQLSAKVIPSPSKRPANYKFYEQRIAMLEESLEVERSRTSELQEQFSVALREKAEAEANKIVSQKGMESLEIMLNSMKSENHQRMAMLEENHARVMETAELQHQAELQDFASNIEQKANSLIMEYKNELQSAEEHFSHKIKELTSENELKISRLQEEKDSLLKKVQEGASLAMQRVQNKHDLEKKRLQSAIQPLQEENNSLKQQIEQLQRELASETVVKENLKSSLDQQSANVQKLESTNRALESTIKTLEEDVYTMKNKIIELEGILKSANVERDGLVEKLIAEETLRRKLHNTIQELKGNIRVFCRVRPPLGDGESAQIAFPDQNSEASTIEIVAQAPGSSLTGNGIKQYAFNFDRVFSPETTNEDVFNELSQLIQSAMDGYNVCIFAYGQTGSGKTHTMSSNTGMIPSSVRMIYNRSTSLKERGWEYRMEGQFLEIYNETIIDLLASGNEEEKGKKKLEIYHDTKAGRTTITNITSEPLDTPEQVTWLLDQASKNRSVAATNANEHSSRSHSVFMLHLNGSNSTTGETCRSTLNLIDLAGSERLSSSQSVGERLKETQAINKSLSCLGDVIHALGSGKEGTYIPYRNSKLTNLLQYSLGGNSKTLMFVNISPLKQHVPETLCSLRFATKVNNTQIGTARKVTK.

The segment at 1-155 is disordered; it reads MEEEGHKSLT…YNDEKSVNAS (155 aa). Over residues 8–23 the composition is skewed to low complexity; the sequence is SLTSHLPQSSSSLSQS. Polar residues predominate over residues 39 to 60; sequence IKTNSSSSNILKPRLSLQNEVN. Over residues 76–86 the composition is skewed to low complexity; that stretch reads SLASVKSSSLA. The segment covering 106-116 has biased composition (polar residues); that stretch reads PISSRSVSASS. Over residues 122-132 the composition is skewed to low complexity; the sequence is ASAVSSSLNSS. The stretch at 155-242 forms a coiled coil; it reads SALRTTEDRL…VSQKGMESLE (88 aa). 10 residues coordinate ATP: Asn473, Arg475, Arg479, Glu543, Gly566, Ser567, Gly568, Lys569, Thr570, and Thr778. Positions 473–807 constitute a Kinesin motor domain; that stretch reads NIRVFCRVRP…LRFATKVNNT (335 aa).

The protein belongs to the TRAFAC class myosin-kinesin ATPase superfamily. Kinesin family. NCD subfamily.

Its subcellular location is the cytoplasm. It is found in the cytoskeleton. The protein resides in the spindle. The protein localises to the nucleus. It catalyses the reaction ATP + H2O = ADP + phosphate + H(+). The enzyme catalyses ATP + H2O + a kinesin associated with a microtubule at position (n) = ADP + phosphate + a kinesin associated with a microtubule at position (n-1, toward the minus end).. Functionally, minus end-directed microtubule (MT) motor that is involved in spindle microtubule shortening, kinetochore capture, and polarization of cytoplasmic microtubules. During mitosis, promotes spindle microtubule shortening by depolymerization. During metaphase, involved in the recapture of kinetochores displaced from the spindle and their transport towards the spindle pole body; promotes transport both by microtubule end-on pulling and by lateral sliding along the side of the microtubule. During interphase, required for the polarization of cytoplasmic microtubules where it orients the microtubule plus ends toward the cell ends and the minus ends toward the cell center. Required for karyogamy. The chain is Kinesin-like protein 2 from Schizosaccharomyces pombe (strain 972 / ATCC 24843) (Fission yeast).